The following is a 451-amino-acid chain: Trigger factor (451 aa).

The region spanning 163–248 (GDIIDMEYTV…IKALYVNILP (86 aa)) is the PPIase FKBP-type domain.

Belongs to the FKBP-type PPIase family. Tig subfamily.

The protein localises to the cytoplasm. The catalysed reaction is [protein]-peptidylproline (omega=180) = [protein]-peptidylproline (omega=0). In terms of biological role, involved in protein export. Acts as a chaperone by maintaining the newly synthesized protein in an open conformation. Functions as a peptidyl-prolyl cis-trans isomerase. The chain is Trigger factor from Leptospira borgpetersenii serovar Hardjo-bovis (strain JB197).